A 775-amino-acid polypeptide reads, in one-letter code: Melanoma-associated antigen D1 (775 aa).

Residues 37–330 (SEAPPTSQAT…PARQTPSAWQ (294 aa)) are disordered. Positions 39-50 (APPTSQATAAAS) are enriched in low complexity. 6 stretches are compositionally biased toward polar residues: residues 52–63 (PNASPQSSQPPT), 84–100 (KAQN…SQAR), 150–180 (GQNT…NQPK), 223–237 (AQTS…NVES), 250–260 (NNLNVEENSNG), and 297–330 (LAWQ…SAWQ). 19 tandem repeats follow at residues 293 to 298 (WQTPLA), 299 to 304 (WQNPSG), 305 to 310 (WQNQTA), 329 to 334 (WQNPVA), 335 to 340 (WQNPVI), 341 to 346 (WPNPVI), 347 to 352 (WQNPVI), 353 to 358 (WPNPIV), 359 to 364 (WPGPIV), 365 to 370 (WPNPMA), 371 to 376 (WQSTPG), 377 to 382 (WQSPPS), 383 to 388 (WQAPPS), 389 to 394 (WQSPQD), 395 to 400 (WQGPPD), 401 to 406 (WQLPPD), 407 to 412 (WSMPPD), 413 to 418 (WSFPSD), and 419 to 424 (WPFPPD). A 22 X 6 AA tandem repeats of W-[PQ]-X-P-X-X region spans residues 293 to 441 (WQTPLAWQNP…IPPDWQNLRP (149 aa)). The disordered stretch occupies residues 374–407 (TPGWQSPPSWQAPPSWQSPQDWQGPPDWQLPPDW). The segment covering 375–406 (PGWQSPPSWQAPPSWQSPQDWQGPPDWQLPPD) has biased composition (low complexity). A 20; approximate repeat occupies 425-429 (WIPAD). 2 repeat units span residues 430–435 (WPIPPD) and 436–441 (WQNLRP). The span at 437 to 452 (QNLRPSPNLRSSPNSR) shows a compositional bias: low complexity. The segment at 437-463 (QNLRPSPNLRSSPNSRASQNQGPPQPR) is disordered. Residues 468-666 (LQERANKLVK…RDWTAQFMEA (199 aa)) form the MAGE domain.

Interacts with DLX5, DLX7 and MSX2 and forms homomultimers. Interacts with UNC5A. Interacts with TRIM28 and PJA1. Interacts with NGFR/p75NTR and RORA. As to expression, ubiquitous and in the seminiferous tubules expressed in Sertoli cells but not in germ cells. Expression decreases in all tissues with increased age and is detectable only in brain cortex and lung.

The protein localises to the cytoplasm. Its subcellular location is the cell membrane. It localises to the nucleus. Involved in the apoptotic response after nerve growth factor (NGF) binding in neuronal cells. Inhibits cell cycle progression, and facilitates NGFR-mediated apoptosis. May act as a regulator of the function of DLX family members. May enhance ubiquitin ligase activity of RING-type zinc finger-containing E3 ubiquitin-protein ligases. Proposed to act through recruitment and/or stabilization of the Ubl-conjugating enzyme (E2) at the E3:substrate complex. Plays a role in the circadian rhythm regulation. May act as RORA co-regulator, modulating the expression of core clock genes such as BMAL1 and NFIL3, induced, or NR1D1, repressed. In Rattus norvegicus (Rat), this protein is Melanoma-associated antigen D1 (Maged1).